We begin with the raw amino-acid sequence, 195 residues long: Probable GTP-binding protein EngB (195 aa).

One can recognise an EngB-type G domain in the interval 24 to 195; the sequence is ELPEIALAGR…EAWDAILEKL (172 aa). Residues 32-39, 59-63, 77-80, 144-147, and 176-178 contribute to the GTP site; these read GRSNVGKS, GKTQL, DVPG, TKAD, and FSS. Mg(2+)-binding residues include S39 and T61.

The protein belongs to the TRAFAC class TrmE-Era-EngA-EngB-Septin-like GTPase superfamily. EngB GTPase family. Mg(2+) is required as a cofactor.

Its function is as follows. Necessary for normal cell division and for the maintenance of normal septation. In Streptococcus pneumoniae (strain P1031), this protein is Probable GTP-binding protein EngB.